Here is a 292-residue protein sequence, read N- to C-terminus: ATP synthase gamma chain (292 aa).

Belongs to the ATPase gamma chain family. F-type ATPases have 2 components, CF(1) - the catalytic core - and CF(0) - the membrane proton channel. CF(1) has five subunits: alpha(3), beta(3), gamma(1), delta(1), epsilon(1). CF(0) has three main subunits: a, b and c.

It localises to the cell inner membrane. Functionally, produces ATP from ADP in the presence of a proton gradient across the membrane. The gamma chain is believed to be important in regulating ATPase activity and the flow of protons through the CF(0) complex. The sequence is that of ATP synthase gamma chain from Brucella abortus (strain S19).